The chain runs to 375 residues: OVARIAN TUMOR DOMAIN-containing deubiquitinating enzyme 7 (375 aa).

Residues 1 to 18 (MAKTKQQKSKPKKQPHQK) are compositionally biased toward basic residues. The segment at 1–23 (MAKTKQQKSKPKKQPHQKQGKDC) is disordered. The OTU domain occupies 37 to 161 (LKIIQVTADG…GEHYNSVRSK (125 aa)). The active site involves aspartate 45. Cysteine 48 functions as the Nucleophile in the catalytic mechanism. Residue histidine 154 is part of the active site. The region spanning 202 to 250 (HVNAGAIKVVMSGSCCDNTEKAEQVLLQVNGDVDAAIEFLIADQGMESL) is the UBA-like domain. Polar residues-rich tracts occupy residues 251 to 264 (TEND…SDTI) and 290 to 305 (ASGN…CTTQ). The segment at 251-306 (TENDTETASASDTINPKHASDSPMENTEQAREELIEEESASGNNSETVQAKCTTQT) is disordered. The Nuclear localization signal motif lies at 308–315 (DKKIPRNK).

This sequence belongs to the peptidase C85 family.

Its subcellular location is the nucleus. The catalysed reaction is Thiol-dependent hydrolysis of ester, thioester, amide, peptide and isopeptide bonds formed by the C-terminal Gly of ubiquitin (a 76-residue protein attached to proteins as an intracellular targeting signal).. In terms of biological role, hydrolase that can remove conjugated ubiquitin from proteins in vitro and may therefore play an important regulatory role at the level of protein turnover by preventing degradation. Cysteine protease with a preference for 'Lys-63' over 'Lys-48' over 'Met-1' -linked ubiquitin (UB) tetramers as substrates. Also cleaves RUB-GST fusion. The protein is OVARIAN TUMOR DOMAIN-containing deubiquitinating enzyme 7 of Arabidopsis thaliana (Mouse-ear cress).